The primary structure comprises 100 residues: ATP synthase subunit c (100 aa).

2 consecutive transmembrane segments (helical) span residues 27-47 (SVIAAGIGLGLAALGGAIGMG) and 72-92 (FIALAMIEAQVIYALVITLIV).

Belongs to the ATPase C chain family. In terms of assembly, F-type ATPases have 2 components, F(1) - the catalytic core - and F(0) - the membrane proton channel. F(1) has five subunits: alpha(3), beta(3), gamma(1), delta(1), epsilon(1). F(0) has three main subunits: a(1), b(2) and c(10-14). The alpha and beta chains form an alternating ring which encloses part of the gamma chain. F(1) is attached to F(0) by a central stalk formed by the gamma and epsilon chains, while a peripheral stalk is formed by the delta and b chains.

Its subcellular location is the cell inner membrane. F(1)F(0) ATP synthase produces ATP from ADP in the presence of a proton or sodium gradient. F-type ATPases consist of two structural domains, F(1) containing the extramembraneous catalytic core and F(0) containing the membrane proton channel, linked together by a central stalk and a peripheral stalk. During catalysis, ATP synthesis in the catalytic domain of F(1) is coupled via a rotary mechanism of the central stalk subunits to proton translocation. The chain is ATP synthase subunit c from Campylobacter curvus (strain 525.92).